A 438-amino-acid polypeptide reads, in one-letter code: 26S proteasome regulatory subunit 6A (438 aa).

The segment at 1–24 (MSTLEELDALDQSQQGGSSNNEGL) is disordered. Residues 11–22 (DQSQQGGSSNNE) are compositionally biased toward polar residues. 226–233 (GPPGTGKT) is a binding site for ATP.

This sequence belongs to the AAA ATPase family.

The protein localises to the cytoplasm. The protein resides in the nucleus. The 26S proteasome is involved in the ATP-dependent degradation of ubiquitinated proteins. The regulatory (or ATPase) complex confers ATP dependency and substrate specificity to the 26S complex. The protein is 26S proteasome regulatory subunit 6A (tbp1) of Schizosaccharomyces pombe (strain 972 / ATCC 24843) (Fission yeast).